The sequence spans 555 residues: L-ascorbate oxidase homolog (555 aa).

A signal peptide spans 1 to 23; sequence MRGVKLLAACLYLAAAATVVVHA. 2 Plastocyanin-like domains span residues 25–145 and 158–301; these read DPYF…LRVN and EDDY…RYEG. 3 N-linked (GlcNAc...) asparagine glycosylation sites follow: Asn33, Asn61, and Asn110. A disulfide bond links Cys103 and Cys539. Asn330, Asn350, and Asn422 each carry an N-linked (GlcNAc...) asparagine glycan. Residues 345–524 enclose the Plastocyanin-like 3 domain; that stretch reads HYGKINITRT…LYASVLSPEK (180 aa).

Belongs to the multicopper oxidase family. As to expression, maximal expression in early binucleate microspores; declines considerably in mature trinucleate pollen.

Its subcellular location is the secreted. Functionally, probable oxidase that may be involved in pollen tube growth. The protein is L-ascorbate oxidase homolog (Bp10) of Brassica napus (Rape).